The following is a 637-amino-acid chain: 1-deoxy-D-xylulose-5-phosphate synthase (637 aa).

Thiamine diphosphate contacts are provided by residues His71 and 112–114; that span reads SHA. Position 144 (Asp144) interacts with Mg(2+). Thiamine diphosphate contacts are provided by residues 145-146, Asn173, Tyr284, and Glu365; that span reads GA. Asn173 contacts Mg(2+).

This sequence belongs to the transketolase family. DXPS subfamily. In terms of assembly, homodimer. The cofactor is Mg(2+). Thiamine diphosphate serves as cofactor.

The enzyme catalyses D-glyceraldehyde 3-phosphate + pyruvate + H(+) = 1-deoxy-D-xylulose 5-phosphate + CO2. It functions in the pathway metabolic intermediate biosynthesis; 1-deoxy-D-xylulose 5-phosphate biosynthesis; 1-deoxy-D-xylulose 5-phosphate from D-glyceraldehyde 3-phosphate and pyruvate: step 1/1. Functionally, catalyzes the acyloin condensation reaction between C atoms 2 and 3 of pyruvate and glyceraldehyde 3-phosphate to yield 1-deoxy-D-xylulose-5-phosphate (DXP). The polypeptide is 1-deoxy-D-xylulose-5-phosphate synthase (Mycobacterium ulcerans (strain Agy99)).